We begin with the raw amino-acid sequence, 156 residues long: Small ribosomal subunit protein uS7 (156 aa).

It belongs to the universal ribosomal protein uS7 family. Part of the 30S ribosomal subunit. Contacts proteins S9 and S11.

In terms of biological role, one of the primary rRNA binding proteins, it binds directly to 16S rRNA where it nucleates assembly of the head domain of the 30S subunit. Is located at the subunit interface close to the decoding center, probably blocks exit of the E-site tRNA. This Desulforamulus reducens (strain ATCC BAA-1160 / DSM 100696 / MI-1) (Desulfotomaculum reducens) protein is Small ribosomal subunit protein uS7.